The chain runs to 322 residues: Rhomboid-like protein 16, chloroplastic (322 aa).

The N-terminal 52 residues, 1–52 (MHAIFCRRVAVGCSSPQLTKLVTKQASQSRHSLSHLLPFDLSSRFVPPYVVS), are a transit peptide targeting the chloroplast. A run of 6 helical transmembrane segments spans residues 110-130 (WING…AVFT), 166-186 (FSHV…YFGA), 201-221 (YFAG…LSVI), 238-258 (IGKL…MLLY), 265-285 (FGLM…LNII), and 295-315 (TLTS…WARI).

Belongs to the peptidase S54 family.

The protein resides in the plastid. The protein localises to the chloroplast membrane. In terms of biological role, rhomboid-type serine protease that catalyzes intramembrane proteolysis. May cleave the plastid translocon component Tic40. The sequence is that of Rhomboid-like protein 16, chloroplastic from Arabidopsis thaliana (Mouse-ear cress).